A 322-amino-acid chain; its full sequence is Cell division control protein 10 (322 aa).

N-acetylmethionine is present on methionine 1. The region spanning 29-302 (KGFQFNIMVV…EGFRARQLIA (274 aa)) is the Septin-type G domain. A G1 motif region spans residues 39–46 (GQSGLGKS). GTP contacts are provided by residues 39–46 (GQSGLGKS), threonine 74, glycine 100, and 180–188 (KSDTLTLDE). The G3 motif stretch occupies residues 97–100 (DTPG). Residues 179 to 182 (GKSD) form a G4 motif region. Phosphothreonine is present on threonine 216. GTP is bound by residues glycine 236 and arginine 251.

Belongs to the TRAFAC class TrmE-Era-EngA-EngB-Septin-like GTPase superfamily. Septin GTPase family. Component of the septin complex which consists of CDC3, CDC10, CDC11, CDC12 and probably SHS1 and rearranges to a cortical collar of highly ordered filaments at the mother-bud-neck. A complex formed by CDC3, CDC10, CDC11 and CDC12 is capable of forming long filaments in vitro and the components seem to be present in a 2:2:2:2 arrangement in vivo. The filaments are proposed to be formed by the end-to-end polymerization of CDC3-CDC12-CDC11 complexes with CDC10 serving as a bridge to bundle the polymers into paired filaments. Component of the GIN4 complex composed of at least BNI5, CDC3, CDC10, CDC11, CDC12, GIN4, NAP1 and SHS1. Self-associates. Interacts with SYP1.

It is found in the membrane. The protein localises to the bud neck. Its function is as follows. Septins are GTPases involved in cytokinesis that assemble early in the cell cycle as a patch at the incipient bud site and form a ring approximate 15 minutes before bud emergence, which transforms into an hour-glass shaped collar of cortical filaments that spans both sides of the mother-bud neck. This collar persists until just before cytokinesis, when it splits into two rings that occupy opposite sides of the neck. The septins at the bud neck serve as a structural scaffold that recruits different components involved in diverse processes at specific stages during the cell cycle. Many proteins bind asymmetrically to the septin collar. The septin assembly is regulated by protein kinases GIN4 and/or CLA4. May act by recruiting MYO1 and HOF1, a protein involved in septation, to the site of cleavage. Septins are also involved in cell morphogenesis, bud site selection, chitin deposition, cell cycle regulation, cell compartmentalization and spore wall formation. This Saccharomyces cerevisiae (strain ATCC 204508 / S288c) (Baker's yeast) protein is Cell division control protein 10 (CDC10).